The sequence spans 126 residues: Large ribosomal subunit protein bL12 (126 aa).

The protein belongs to the bacterial ribosomal protein bL12 family. As to quaternary structure, homodimer. Part of the ribosomal stalk of the 50S ribosomal subunit. Forms a multimeric L10(L12)X complex, where L10 forms an elongated spine to which 2 to 4 L12 dimers bind in a sequential fashion. Binds GTP-bound translation factors.

Forms part of the ribosomal stalk which helps the ribosome interact with GTP-bound translation factors. Is thus essential for accurate translation. This Caulobacter sp. (strain K31) protein is Large ribosomal subunit protein bL12.